Reading from the N-terminus, the 428-residue chain is MLGALLLSGAVHAAVQPLESVVAIVDNDVIMKSQMDQRVREVQQTIAKRGSGVPPAEALQPQVLDRLILENLQLQMGERSGIRVSDNELNQAIGTIAQRNNMSVEQFRAALAHDGLSYNDAREQVRREMIISRVRQRRVAERIQVSQQEVKNFLASDQGKAQLSEEFHLANILIATPDSASSDAIQAAAVKAKGIYDQLKKGADFTRLAATTSSSENALEGGDMGWRKAAQLPPPFGDMLSAMPVGDVTPPARTPGGFIILKLLEKRGGQGQAQMRDEVHVRHILIKPSEIRNEEETKRLAEKIYDRIQNGEDFAELAKSFSEDPGSALNGGDLNWVDPNSLVPEFRQVMNETPQGELSKPFKTAYGWHVLEVLGRRSTDATDQAREQQALNVLRNRKYDEELQTWLRQIRDEAYVEIKLPGATQAAQ.

An N-terminal signal peptide occupies residues 1 to 13 (MLGALLLSGAVHA). 2 consecutive PpiC domains span residues 164–265 (SEEF…KLLE) and 276–375 (RDEV…EVLG).

The protein resides in the periplasm. It catalyses the reaction [protein]-peptidylproline (omega=180) = [protein]-peptidylproline (omega=0). Functionally, chaperone involved in the correct folding and assembly of outer membrane proteins. Recognizes specific patterns of aromatic residues and the orientation of their side chains, which are found more frequently in integral outer membrane proteins. May act in both early periplasmic and late outer membrane-associated steps of protein maturation. The protein is Chaperone SurA of Pseudomonas savastanoi pv. phaseolicola (strain 1448A / Race 6) (Pseudomonas syringae pv. phaseolicola (strain 1448A / Race 6)).